A 241-amino-acid polypeptide reads, in one-letter code: tRNA (guanine-N(7)-)-methyltransferase (241 aa).

The tract at residues 1-20 is disordered; that stretch reads MTESNDTPIQPEAGDERQHR. Positions 71, 96, 123, and 146 each coordinate S-adenosyl-L-methionine. Asp146 is a catalytic residue. Substrate is bound by residues Lys150, Asp182, and 219 to 222; that span reads TKFE.

Belongs to the class I-like SAM-binding methyltransferase superfamily. TrmB family.

The catalysed reaction is guanosine(46) in tRNA + S-adenosyl-L-methionine = N(7)-methylguanosine(46) in tRNA + S-adenosyl-L-homocysteine. It functions in the pathway tRNA modification; N(7)-methylguanine-tRNA biosynthesis. Catalyzes the formation of N(7)-methylguanine at position 46 (m7G46) in tRNA. This chain is tRNA (guanine-N(7)-)-methyltransferase, found in Pseudomonas fluorescens (strain ATCC BAA-477 / NRRL B-23932 / Pf-5).